The sequence spans 546 residues: NAD(P)H-quinone oxidoreductase chain 4 (546 aa).

14 consecutive transmembrane segments (helical) span residues 24–44 (FPWL…IPFF), 56–76 (FALS…INGF), 108–128 (MPLI…AWPV), 132–152 (PKLF…VFAV), 156–176 (LLFF…LAIW), 188–208 (FIIY…AMGF), 232–252 (ILCY…VPLH), 263–283 (TAPV…YALL), 297–317 (FSPL…LTSF), 326–346 (IAYS…SFSS), 352–372 (AMLQ…LVGA), 396–416 (FALW…SGFV), 437–457 (VIMA…LLSM), and 484–504 (IYII…PRLV).

The protein belongs to the complex I subunit 4 family.

Its subcellular location is the cellular thylakoid membrane. The catalysed reaction is a plastoquinone + NADH + (n+1) H(+)(in) = a plastoquinol + NAD(+) + n H(+)(out). The enzyme catalyses a plastoquinone + NADPH + (n+1) H(+)(in) = a plastoquinol + NADP(+) + n H(+)(out). In terms of biological role, NDH-1 shuttles electrons from NAD(P)H, via FMN and iron-sulfur (Fe-S) centers, to quinones in the respiratory chain. The immediate electron acceptor for the enzyme in this species is believed to be plastoquinone. Couples the redox reaction to proton translocation (for every two electrons transferred, four hydrogen ions are translocated across the cytoplasmic membrane), and thus conserves the redox energy in a proton gradient. The protein is NAD(P)H-quinone oxidoreductase chain 4 of Prochlorococcus marinus subsp. pastoris (strain CCMP1986 / NIES-2087 / MED4).